The primary structure comprises 276 residues: Octanoyltransferase LipM (276 aa).

Residues 32 to 247 (GEVAPTLRFY…GFEDALQLTF (216 aa)) enclose the BPL/LPL catalytic domain. The active-site Acyl-thioester intermediate is C149.

It belongs to the octanoyltransferase LipM family. Monomer.

The catalysed reaction is octanoyl-[ACP] + L-lysyl-[protein] = N(6)-octanoyl-L-lysyl-[protein] + holo-[ACP] + H(+). The protein operates within protein modification; protein lipoylation via endogenous pathway; protein N(6)-(lipoyl)lysine from octanoyl-[acyl-carrier-protein]. Its function is as follows. Catalyzes the transfer of endogenously produced octanoic acid from octanoyl-acyl-carrier-protein onto the lipoyl domain of GcvH, an intermediate carrier during protein lipoylation. The chain is Octanoyltransferase LipM from Exiguobacterium sibiricum (strain DSM 17290 / CCUG 55495 / CIP 109462 / JCM 13490 / 255-15).